Here is a 475-residue protein sequence, read N- to C-terminus: Eukaryotic translation initiation factor 2 subunit 3 (475 aa).

One can recognise a tr-type G domain in the interval 38 to 247 (QATINIGTIG…IVNKIPVPPR (210 aa)). Residues 47 to 54 (GHVAHGKS) are G1. 50 to 55 (AHGKST) provides a ligand contact to GTP. Residues 75 to 79 (NITIK) form a G2 region. A G3 region spans residues 133–136 (DCPG). GTP contacts are provided by residues 189–192 (NKID) and 224–226 (SAQ). The tract at residues 189–192 (NKID) is G4. A G5 region spans residues 224–226 (SAQ). Positions 456 to 468 (GQIFGGKTITPVL) are interacts with CDC123.

Belongs to the TRAFAC class translation factor GTPase superfamily. Classic translation factor GTPase family. EIF2G subfamily. In terms of assembly, eukaryotic translation initiation factor 2 eIF2 is a heterotrimeric complex composed of an alpha, a beta and a gamma subunit. The factors eIF-1, eIF-2, eIF-3, TIF5/eIF-5 and methionyl-tRNAi form a multifactor complex (MFC) that may bind to the 40S ribosome.

It is found in the cytoplasm. It localises to the cytosol. The catalysed reaction is GTP + H2O = GDP + phosphate + H(+). In terms of biological role, as a subunit of eukaryotic initiation factor 2 eIF2, involved in the early steps of protein synthesis. In the presence of GTP, eIF-2 forms a ternary complex with initiator tRNA Met-tRNAi and then recruits the 40S ribosomal complex and initiation factors eIF-1, eIF-1A and eIF-3 to form the 43S pre-initiation complex (43S PIC), a step that determines the rate of protein translation. The 43S PIC binds to mRNA and scans downstream to the initiation codon, where it forms a 48S initiation complex by codon-anticodon base pairing. This leads to the displacement of eIF-1 to allow GTPase-activating protein (GAP) eIF-5-mediated hydrolysis of eIF2-bound GTP. Hydrolysis of GTP and release of Pi, which makes GTP hydrolysis irreversible, causes the release of the eIF-2-GDP binary complex from the 40S subunit, an event that is essential for the subsequent joining of the 60S ribosomal subunit to form an elongation-competent 80S ribosome. In order for eIF-2 to recycle and catalyze another round of initiation, the GDP bound to eIF-2 must be exchanged with GTP by way of a reaction catalyzed by GDP-GTP exchange factor (GEF) eIF-2B. This is Eukaryotic translation initiation factor 2 subunit 3 from Drosophila melanogaster (Fruit fly).